A 282-amino-acid polypeptide reads, in one-letter code: Pantothenate synthetase (282 aa).

Position 30–37 (30–37) interacts with ATP; it reads MGYLHEGH. The active-site Proton donor is His-37. Position 61 (Gln-61) interacts with (R)-pantoate. Gln-61 is a binding site for beta-alanine. Residue 147 to 150 participates in ATP binding; the sequence is GMKD. (R)-pantoate is bound at residue Gln-153. Residues Val-176 and 184-187 each bind ATP; that span reads KSSR.

This sequence belongs to the pantothenate synthetase family. As to quaternary structure, homodimer.

The protein resides in the cytoplasm. The catalysed reaction is (R)-pantoate + beta-alanine + ATP = (R)-pantothenate + AMP + diphosphate + H(+). The protein operates within cofactor biosynthesis; (R)-pantothenate biosynthesis; (R)-pantothenate from (R)-pantoate and beta-alanine: step 1/1. Functionally, catalyzes the condensation of pantoate with beta-alanine in an ATP-dependent reaction via a pantoyl-adenylate intermediate. This chain is Pantothenate synthetase, found in Bacillus cereus (strain G9842).